A 75-amino-acid chain; its full sequence is Exodeoxyribonuclease 7 small subunit (75 aa).

Belongs to the XseB family. As to quaternary structure, heterooligomer composed of large and small subunits.

The protein localises to the cytoplasm. It catalyses the reaction Exonucleolytic cleavage in either 5'- to 3'- or 3'- to 5'-direction to yield nucleoside 5'-phosphates.. Bidirectionally degrades single-stranded DNA into large acid-insoluble oligonucleotides, which are then degraded further into small acid-soluble oligonucleotides. The sequence is that of Exodeoxyribonuclease 7 small subunit from Citrifermentans bemidjiense (strain ATCC BAA-1014 / DSM 16622 / JCM 12645 / Bem) (Geobacter bemidjiensis).